The following is a 446-amino-acid chain: RUN domain-containing protein 3A (446 aa).

Residues 1–298 form an interaction with RAP2A region; sequence METSFVQTTM…LQLQLEEAAA (298 aa). In terms of domain architecture, RUN spans 52–189; that stretch reads DDSSEEFVNF…IDFSFCLKGE (138 aa). Phosphothreonine is present on Thr-215. A disordered region spans residues 216–239; that stretch reads DEEERHSAESSTSEDNSPEHPYLP. Ser-232 is modified (phosphoserine). Residues 267 to 322 are a coiled coil; sequence YLEELVRLRESQLKDLEAENRRLQLQLEEAAAQNQREKRELEGVILELQEQLTGLI. The segment covering 372–384 has biased composition (polar residues); the sequence is PLSAEASLSSDSQ. Residues 372–404 form a disordered region; the sequence is PLSAEASLSSDSQRLGEGTRDEEPWGPIGKDPT. A phosphoserine mark is found at Ser-416 and Ser-419.

The protein belongs to the RUNDC3 family. In terms of assembly, interacts with the GTP-bound form of RAP2A.

In terms of biological role, may act as an effector of RAP2A in neuronal cells. The chain is RUN domain-containing protein 3A (RUNDC3A) from Pongo abelii (Sumatran orangutan).